The primary structure comprises 390 residues: Queuine tRNA-ribosyltransferase (390 aa).

The Proton acceptor role is filled by D92. Substrate-binding positions include 92–96 (DSGGF), D146, Q195, and G222. Residues 253–259 (GVGTPED) form an RNA binding region. Catalysis depends on D272, which acts as the Nucleophile. An RNA binding; important for wobble base 34 recognition region spans residues 277 to 281 (TRNAR). Residues C310, C312, C315, and H354 each contribute to the Zn(2+) site.

Belongs to the queuine tRNA-ribosyltransferase family. In terms of assembly, homodimer. Within each dimer, one monomer is responsible for RNA recognition and catalysis, while the other monomer binds to the replacement base PreQ1. Zn(2+) serves as cofactor.

The catalysed reaction is 7-aminomethyl-7-carbaguanine + guanosine(34) in tRNA = 7-aminomethyl-7-carbaguanosine(34) in tRNA + guanine. It participates in tRNA modification; tRNA-queuosine biosynthesis. Catalyzes the base-exchange of a guanine (G) residue with the queuine precursor 7-aminomethyl-7-deazaguanine (PreQ1) at position 34 (anticodon wobble position) in tRNAs with GU(N) anticodons (tRNA-Asp, -Asn, -His and -Tyr). Catalysis occurs through a double-displacement mechanism. The nucleophile active site attacks the C1' of nucleotide 34 to detach the guanine base from the RNA, forming a covalent enzyme-RNA intermediate. The proton acceptor active site deprotonates the incoming PreQ1, allowing a nucleophilic attack on the C1' of the ribose to form the product. After dissociation, two additional enzymatic reactions on the tRNA convert PreQ1 to queuine (Q), resulting in the hypermodified nucleoside queuosine (7-(((4,5-cis-dihydroxy-2-cyclopenten-1-yl)amino)methyl)-7-deazaguanosine). In Acidovorax sp. (strain JS42), this protein is Queuine tRNA-ribosyltransferase.